The following is a 120-amino-acid chain: C-C motif chemokine 23 (120 aa).

The N-terminal stretch at 1-21 is a signal peptide; it reads MKVSVAALSCLMLVTALGSQA. 3 cysteine pairs are disulfide-bonded: Cys-54/Cys-78, Cys-55/Cys-94, and Cys-65/Cys-105.

The protein belongs to the intercrine beta (chemokine CC) family.

The protein localises to the secreted. Functionally, shows chemotactic activity for monocytes, resting T-lymphocytes, and neutrophils, but not for activated lymphocytes. Inhibits proliferation of myeloid progenitor cells in colony formation assays. This protein can bind heparin. Binds CCR1. The polypeptide is C-C motif chemokine 23 (CCL23) (Macaca mulatta (Rhesus macaque)).